Here is a 491-residue protein sequence, read N- to C-terminus: Aspartyl/glutamyl-tRNA(Asn/Gln) amidotransferase subunit B (491 aa).

This sequence belongs to the GatB/GatE family. GatB subfamily. As to quaternary structure, heterotrimer of A, B and C subunits.

The enzyme catalyses L-glutamyl-tRNA(Gln) + L-glutamine + ATP + H2O = L-glutaminyl-tRNA(Gln) + L-glutamate + ADP + phosphate + H(+). The catalysed reaction is L-aspartyl-tRNA(Asn) + L-glutamine + ATP + H2O = L-asparaginyl-tRNA(Asn) + L-glutamate + ADP + phosphate + 2 H(+). Functionally, allows the formation of correctly charged Asn-tRNA(Asn) or Gln-tRNA(Gln) through the transamidation of misacylated Asp-tRNA(Asn) or Glu-tRNA(Gln) in organisms which lack either or both of asparaginyl-tRNA or glutaminyl-tRNA synthetases. The reaction takes place in the presence of glutamine and ATP through an activated phospho-Asp-tRNA(Asn) or phospho-Glu-tRNA(Gln). The polypeptide is Aspartyl/glutamyl-tRNA(Asn/Gln) amidotransferase subunit B (Burkholderia cenocepacia (strain HI2424)).